The primary structure comprises 39 residues: Photosystem II reaction center protein L (39 aa).

Residues 18 to 38 (SLYLGLLLVAVLGILFSSYFF) traverse the membrane as a helical segment.

This sequence belongs to the PsbL family. As to quaternary structure, PSII is composed of 1 copy each of membrane proteins PsbA, PsbB, PsbC, PsbD, PsbE, PsbF, PsbH, PsbI, PsbJ, PsbK, PsbL, PsbM, PsbT, PsbX, PsbY, PsbZ, Psb30/Ycf12, peripheral proteins PsbO, CyanoQ (PsbQ), PsbU, PsbV and a large number of cofactors. It forms dimeric complexes.

Its subcellular location is the cellular thylakoid membrane. Functionally, one of the components of the core complex of photosystem II (PSII). PSII is a light-driven water:plastoquinone oxidoreductase that uses light energy to abstract electrons from H(2)O, generating O(2) and a proton gradient subsequently used for ATP formation. It consists of a core antenna complex that captures photons, and an electron transfer chain that converts photonic excitation into a charge separation. This subunit is found at the monomer-monomer interface and is required for correct PSII assembly and/or dimerization. This is Photosystem II reaction center protein L from Microcystis aeruginosa (strain NIES-843 / IAM M-2473).